The sequence spans 317 residues: Beta-ketoacyl-[acyl-carrier-protein] synthase III (317 aa).

Catalysis depends on residues Cys112 and His244. The ACP-binding stretch occupies residues 245–249; the sequence is QANVR. Residue Asn274 is part of the active site.

This sequence belongs to the thiolase-like superfamily. FabH family. In terms of assembly, homodimer.

The protein localises to the cytoplasm. The catalysed reaction is malonyl-[ACP] + acetyl-CoA + H(+) = 3-oxobutanoyl-[ACP] + CO2 + CoA. Its pathway is lipid metabolism; fatty acid biosynthesis. Functionally, catalyzes the condensation reaction of fatty acid synthesis by the addition to an acyl acceptor of two carbons from malonyl-ACP. Catalyzes the first condensation reaction which initiates fatty acid synthesis and may therefore play a role in governing the total rate of fatty acid production. Possesses both acetoacetyl-ACP synthase and acetyl transacylase activities. Its substrate specificity determines the biosynthesis of branched-chain and/or straight-chain of fatty acids. In Rickettsia canadensis (strain McKiel), this protein is Beta-ketoacyl-[acyl-carrier-protein] synthase III.